Here is a 61-residue protein sequence, read N- to C-terminus: Disintegrin atroxatin (61 aa).

One can recognise a Disintegrin domain in the interval 1–61 (NPCCDAATCK…ADCPRKGIYG (61 aa)). Intrachain disulfides connect C3–C26, C9–C23, C17–C23, C22–C47, and C35–C54. The Cell attachment site motif lies at 39-41 (RGD).

Belongs to the venom metalloproteinase (M12B) family. P-II subfamily. P-IIa sub-subfamily. In terms of assembly, monomer (disintegrin). As to expression, expressed by the venom gland.

It localises to the secreted. Functionally, inhibits fibrinogen interaction with platelets. Acts by binding to alpha-IIb/beta-3 (ITGA2B/ITGB3) on the platelet surface and inhibits aggregation induced by ADP, thrombin, platelet-activating factor and collagen. The polypeptide is Disintegrin atroxatin (Crotalus atrox (Western diamondback rattlesnake)).